Consider the following 555-residue polypeptide: HERV-H_2q24.1 provirus ancestral Env polyprotein (555 aa).

Residues methionine 1–proline 35 form the signal peptide. The Extracellular portion of the chain corresponds to leucine 36–valine 515. The N-linked (GlcNAc...) asparagine glycan is linked to asparagine 47. Residues cysteine 64 to cysteine 67 carry the CXXC motif. N-linked (GlcNAc...) asparagine glycans are attached at residues asparagine 222, asparagine 265, asparagine 283, asparagine 352, and asparagine 370. The fusion peptide stretch occupies residues valine 388 to serine 408. N-linked (GlcNAc...) asparagine glycosylation is present at asparagine 475. The chain crosses the membrane as a helical span at residues leucine 516 to phenylalanine 536. Topologically, residues histidine 537–isoleucine 555 are cytoplasmic.

This sequence belongs to the gamma type-C retroviral envelope protein family. HERV class-I H env subfamily. As to quaternary structure, the surface (SU) and transmembrane (TM) proteins form a heterodimer. SU and TM are attached by noncovalent interactions or by a labile interchain disulfide bond. Post-translationally, specific enzymatic cleavages in vivo yield the mature SU and TM proteins. In terms of tissue distribution, low expression in testis.

The protein localises to the virion. Its subcellular location is the cell membrane. Retroviral envelope proteins mediate receptor recognition and membrane fusion during early infection. Endogenous envelope proteins may have kept, lost or modified their original function during evolution. This endogenous envelope protein has lost its original fusogenic properties. Its function is as follows. SU mediates receptor recognition. In terms of biological role, TM anchors the envelope heterodimer to the viral membrane through one transmembrane domain. The other hydrophobic domain, called fusion peptide, mediates fusion of the viral membrane with the target cell membrane. The polypeptide is HERV-H_2q24.1 provirus ancestral Env polyprotein (Homo sapiens (Human)).